A 190-amino-acid chain; its full sequence is Imidazoleglycerol-phosphate dehydratase (190 aa).

Belongs to the imidazoleglycerol-phosphate dehydratase family.

The protein resides in the cytoplasm. It catalyses the reaction D-erythro-1-(imidazol-4-yl)glycerol 3-phosphate = 3-(imidazol-4-yl)-2-oxopropyl phosphate + H2O. The protein operates within amino-acid biosynthesis; L-histidine biosynthesis; L-histidine from 5-phospho-alpha-D-ribose 1-diphosphate: step 6/9. This Methanococcus vannielii (strain ATCC 35089 / DSM 1224 / JCM 13029 / OCM 148 / SB) protein is Imidazoleglycerol-phosphate dehydratase.